A 233-amino-acid polypeptide reads, in one-letter code: Large ribosomal subunit protein uL2 (233 aa).

Residues 195–233 form a disordered region; that stretch reads PHGGGNHQHVGRPSTVGRNAPPGRKVGRLSPKRRRVNGR. A compositionally biased stretch (basic residues) spans 219 to 233; sequence KVGRLSPKRRRVNGR.

Belongs to the universal ribosomal protein uL2 family. In terms of assembly, part of the 50S ribosomal subunit. Forms a bridge to the 30S subunit in the 70S ribosome.

Its function is as follows. One of the primary rRNA binding proteins. Required for association of the 30S and 50S subunits to form the 70S ribosome, for tRNA binding and peptide bond formation. It has been suggested to have peptidyltransferase activity; this is somewhat controversial. Makes several contacts with the 16S rRNA in the 70S ribosome. This Thermoplasma acidophilum (strain ATCC 25905 / DSM 1728 / JCM 9062 / NBRC 15155 / AMRC-C165) protein is Large ribosomal subunit protein uL2.